Reading from the N-terminus, the 351-residue chain is UDP-N-acetylglucosamine--N-acetylmuramyl-(pentapeptide) pyrophosphoryl-undecaprenol N-acetylglucosamine transferase (351 aa).

UDP-N-acetyl-alpha-D-glucosamine contacts are provided by residues 11–13, N120, R161, S187, and Q281; that span reads TGG.

The protein belongs to the glycosyltransferase 28 family. MurG subfamily.

The protein localises to the cell inner membrane. The enzyme catalyses di-trans,octa-cis-undecaprenyl diphospho-N-acetyl-alpha-D-muramoyl-L-alanyl-D-glutamyl-meso-2,6-diaminopimeloyl-D-alanyl-D-alanine + UDP-N-acetyl-alpha-D-glucosamine = di-trans,octa-cis-undecaprenyl diphospho-[N-acetyl-alpha-D-glucosaminyl-(1-&gt;4)]-N-acetyl-alpha-D-muramoyl-L-alanyl-D-glutamyl-meso-2,6-diaminopimeloyl-D-alanyl-D-alanine + UDP + H(+). Its pathway is cell wall biogenesis; peptidoglycan biosynthesis. In terms of biological role, cell wall formation. Catalyzes the transfer of a GlcNAc subunit on undecaprenyl-pyrophosphoryl-MurNAc-pentapeptide (lipid intermediate I) to form undecaprenyl-pyrophosphoryl-MurNAc-(pentapeptide)GlcNAc (lipid intermediate II). The chain is UDP-N-acetylglucosamine--N-acetylmuramyl-(pentapeptide) pyrophosphoryl-undecaprenol N-acetylglucosamine transferase from Rippkaea orientalis (strain PCC 8801 / RF-1) (Cyanothece sp. (strain PCC 8801)).